The chain runs to 39 residues: Mu-like prophage FluMu protein com (39 aa).

Belongs to the com family.

The protein is Mu-like prophage FluMu protein com of Haemophilus influenzae (strain ATCC 51907 / DSM 11121 / KW20 / Rd).